The chain runs to 195 residues: Phenoloxidase subunit 1 (195 aa).

Residue H10 coordinates Cu cation. Residues N77, N97, and N98 are each glycosylated (N-linked (GlcNAc...) asparagine).

It belongs to the tyrosinase family. In terms of assembly, heterodimer. Cu(2+) is required as a cofactor.

Its subcellular location is the secreted. The catalysed reaction is 2 L-dopa + O2 = 2 L-dopaquinone + 2 H2O. The enzyme catalyses L-tyrosine + O2 = L-dopaquinone + H2O. Its function is as follows. This is a copper-containing oxidase that functions in the formation of pigments such as melanins and other polyphenolic compounds. Catalyzes the rate-limiting conversions of tyrosine to DOPA, DOPA to DOPA-quinone and possibly 5,6 dihydroxyindole to indole-5'6 quinone. The chain is Phenoloxidase subunit 1 from Simulium damnosum (Black fly).